Consider the following 242-residue polypeptide: Biosynthetic peptidoglycan transglycosylase (242 aa).

The helical transmembrane segment at 19 to 39 (LMVVLAVFWGGGIALFSVAPV) threads the bilayer.

This sequence belongs to the glycosyltransferase 51 family.

It is found in the cell inner membrane. The catalysed reaction is [GlcNAc-(1-&gt;4)-Mur2Ac(oyl-L-Ala-gamma-D-Glu-L-Lys-D-Ala-D-Ala)](n)-di-trans,octa-cis-undecaprenyl diphosphate + beta-D-GlcNAc-(1-&gt;4)-Mur2Ac(oyl-L-Ala-gamma-D-Glu-L-Lys-D-Ala-D-Ala)-di-trans,octa-cis-undecaprenyl diphosphate = [GlcNAc-(1-&gt;4)-Mur2Ac(oyl-L-Ala-gamma-D-Glu-L-Lys-D-Ala-D-Ala)](n+1)-di-trans,octa-cis-undecaprenyl diphosphate + di-trans,octa-cis-undecaprenyl diphosphate + H(+). It functions in the pathway cell wall biogenesis; peptidoglycan biosynthesis. Functionally, peptidoglycan polymerase that catalyzes glycan chain elongation from lipid-linked precursors. In Escherichia coli O17:K52:H18 (strain UMN026 / ExPEC), this protein is Biosynthetic peptidoglycan transglycosylase.